Here is a 258-residue protein sequence, read N- to C-terminus: Steroid 5-alpha-reductase DET2 (258 aa).

A run of 6 helical transmembrane segments spans residues 8 to 28 (FHYC…SLYF), 49 to 69 (LAWF…FPSG), 77 to 97 (SFLL…LYPL), 109 to 129 (FPVS…YLQA), 144 to 164 (LFWW…WVNV), and 201 to 221 (IMEW…GFFL).

This sequence belongs to the steroid 5-alpha reductase family. Accumulates in fibers (seed trichomes) during both their initiation and elongation phases. Also present in roots, hypocotyls, leaves, flowers and ovules, and barely in cotyledons.

It is found in the membrane. The catalysed reaction is a 3-oxo-5alpha-steroid + NADP(+) = a 3-oxo-Delta(4)-steroid + NADPH + H(+). Its pathway is plant hormone biosynthesis; brassinosteroid biosynthesis. Functionally, involved in a reduction step in the biosynthesis of the plant steroid, brassinolide (BL). Promotes cotton fibers (seed trichomes) initiation and elongation. This Gossypium hirsutum (Upland cotton) protein is Steroid 5-alpha-reductase DET2.